The sequence spans 956 residues: Nitrogen regulatory protein NUT1 (956 aa).

Residues 1–12 (MNPTITEHDFRF) show a composition bias toward basic and acidic residues. 5 disordered regions span residues 1 to 51 (MNPT…NDAQ), 120 to 222 (QQEE…PAAA), 240 to 262 (KTSI…FQVP), 348 to 373 (GQSI…SQVS), and 524 to 661 (TLPG…DAPT). The span at 15-37 (RPAAPGRDPGSDSSDDPLPASLR) shows a compositional bias: low complexity. Composition is skewed to polar residues over residues 42–51 (DRQSAFNDAQ), 131–153 (PLKT…QKKS), 167–194 (SHGS…NAIS), and 208–217 (AAQSQFNPQS). Polar residues predominate over residues 588–613 (NASTTAIPNSQMQYEQQGVQGHTNSP). Composition is skewed to low complexity over residues 623-633 (SGFSSVVHSRP) and 640-661 (SKNG…DAPT). The segment at 663–687 (CTNCATQTTPLWRRNPEGQPLCNAC) adopts a GATA-type zinc-finger fold. Residues 708 to 890 (KKRNRGSGSN…AATRPSGFGT (183 aa)) are disordered. Residues 713–760 (GSGSNVPGATSGSRSKKGATSTAVSGTNTRKNSSLAISRTASTTNVQV) are compositionally biased toward polar residues. Low complexity predominate over residues 812–839 (VVPIAAAPPKNMPGPGAAAAARTVALGP). Polar residues-rich tracts occupy residues 849 to 863 (SPAN…NANH) and 872 to 881 (PENSTGSNEA).

It is found in the nucleus. Major nitrogen regulatory protein; activates expression of nitrogen-regulated genes. The polypeptide is Nitrogen regulatory protein NUT1 (NUT1) (Pyricularia oryzae (strain 70-15 / ATCC MYA-4617 / FGSC 8958) (Rice blast fungus)).